The sequence spans 78 residues: Large ribosomal subunit protein bL28 (78 aa).

A disordered region spans residues 1-23 (MSRVCQVTGKRPMVGNNRSHAKN).

This sequence belongs to the bacterial ribosomal protein bL28 family.

This is Large ribosomal subunit protein bL28 from Shewanella pealeana (strain ATCC 700345 / ANG-SQ1).